Here is a 626-residue protein sequence, read N- to C-terminus: Myelin-associated glycoprotein (626 aa).

The first 19 residues, 1–19 (MIFLTALPLFWIMISASRG), serve as a signal peptide directing secretion. Residues 20-325 (GHWGAWMPSS…RTVGLSVMYA (306 aa)) are interaction with RTN4R and RTN4RL2. The Extracellular portion of the chain corresponds to 20 to 516 (GHWGAWMPSS…HRLMWAKIGP (497 aa)). Residues 22-120 (WGAWMPSSIS…LGGKYYFRGD (99 aa)) form the Ig-like V-type domain. Intrachain disulfides connect cysteine 37/cysteine 165, cysteine 42/cysteine 100, and cysteine 159/cysteine 217. 65–67 (YPK) serves as a coordination point for a ganglioside GT1b (d18:1(4E)). N-linked (GlcNAc...) asparagine glycosylation is present at asparagine 99. Asparagine 106 carries an N-linked (GlcNAc...) asparagine; partial glycan. Residues arginine 118 and 124–128 (YNQYT) each bind a ganglioside GT1b (d18:1(4E)). 4 Ig-like C2-type domains span residues 139-237 (NTPN…MDVK), 241-325 (VIVE…VMYA), 327-412 (WKPT…VEFA), and 413-508 (PVLL…GAHR). 2 N-linked (GlcNAc...) asparagine glycosylation sites follow: asparagine 223 and asparagine 246. Cysteine 261 and cysteine 305 are oxidised to a cystine. Asparagine 315 is a glycosylation site (N-linked (GlcNAc...) asparagine). The cysteines at positions 347 and 392 are disulfide-linked. The N-linked (GlcNAc...) asparagine glycan is linked to asparagine 406. 2 cysteine pairs are disulfide-bonded: cysteine 421/cysteine 430 and cysteine 432/cysteine 488. Asparagine 450 and asparagine 454 each carry an N-linked (GlcNAc...) asparagine glycan. Residues 517 to 536 (VGAVVAFAILIAIVCYITQT) traverse the membrane as a helical segment. The S-palmitoyl cysteine moiety is linked to residue cysteine 531. At 537-626 (RRKKNVTESP…LAEYAEIRVK (90 aa)) the chain is on the cytoplasmic side. Serine 545, serine 547, and serine 549 each carry phosphoserine. The tract at residues 577–626 (LGSERRLLGLRGEPPELDLSYSHSDLGKRPTKDSYTLTEELAEYAEIRVK) is required for normal axon myelination in the central nervous system. Residues 582-608 (RLLGLRGEPPELDLSYSHSDLGKRPTK) form a disordered region.

Belongs to the immunoglobulin superfamily. SIGLEC (sialic acid binding Ig-like lectin) family. Monomer and homodimer. Interacts (via the first three N-terminal Ig-like domains) with RTN4R and RTN4RL2. Interacts with RTN4R. Interacts with isoform 2 of BSG. Post-translationally, N-glycosylated. Phosphorylated on tyrosine residues. In terms of processing, ubiquitinated, leading to proteasomal degradation. In terms of tissue distribution, both isoform 1 and isoform 2 are detected in myelinated structures in the central and peripheral nervous system, in periaxonal myelin and at Schmidt-Lanterman incisures. Detected in optic nerve, in oligodendroglia and in periaxonal myelin sheaths. Detected in compact myelin (at protein level). Both isoform 1 and isoform 2 are detected in the central and peripheral nervous system.

It localises to the cell membrane. The protein resides in the membrane raft. Functionally, adhesion molecule that mediates interactions between myelinating cells and neurons by binding to neuronal sialic acid-containing gangliosides and to the glycoproteins RTN4R and RTN4RL2. Not required for initial myelination, but seems to play a role in the maintenance of normal axon myelination. Protects motoneurons against apoptosis, also after injury; protection against apoptosis is probably mediated via interaction with neuronal RTN4R and RTN4RL2. Required to prevent degeneration of myelinated axons in adults; this probably depends on binding to gangliosides on the axon cell membrane. Negative regulator of neurite outgrowth; in dorsal root ganglion neurons the inhibition is mediated primarily via binding to neuronal RTN4R or RTN4RL2 and to a lesser degree via binding to neuronal gangliosides. In cerebellar granule cells the inhibition is mediated primarily via binding to neuronal gangliosides. In sensory neurons, inhibition of neurite extension depends only partially on RTN4R, RTN4RL2 and gangliosides. Inhibits axon longitudinal growth. Inhibits axon outgrowth by binding to RTN4R. Preferentially binds to alpha-2,3-linked sialic acid. Binds ganglioside Gt1b. In Homo sapiens (Human), this protein is Myelin-associated glycoprotein (MAG).